Consider the following 88-residue polypeptide: Small ribosomal subunit protein bS18A (88 aa).

It belongs to the bacterial ribosomal protein bS18 family. As to quaternary structure, part of the 30S ribosomal subunit. Forms a tight heterodimer with protein bS6.

Its function is as follows. Binds as a heterodimer with protein bS6 to the central domain of the 16S rRNA, where it helps stabilize the platform of the 30S subunit. In Roseiflexus sp. (strain RS-1), this protein is Small ribosomal subunit protein bS18A.